Consider the following 158-residue polypeptide: Cyclic pyranopterin monophosphate synthase (158 aa).

Substrate contacts are provided by residues 76 to 78 (LCH) and 114 to 115 (ME). Asp129 is a catalytic residue.

This sequence belongs to the MoaC family. In terms of assembly, homohexamer; trimer of dimers.

It carries out the reaction (8S)-3',8-cyclo-7,8-dihydroguanosine 5'-triphosphate = cyclic pyranopterin phosphate + diphosphate. It functions in the pathway cofactor biosynthesis; molybdopterin biosynthesis. In terms of biological role, catalyzes the conversion of (8S)-3',8-cyclo-7,8-dihydroguanosine 5'-triphosphate to cyclic pyranopterin monophosphate (cPMP). The protein is Cyclic pyranopterin monophosphate synthase of Brucella anthropi (strain ATCC 49188 / DSM 6882 / CCUG 24695 / JCM 21032 / LMG 3331 / NBRC 15819 / NCTC 12168 / Alc 37) (Ochrobactrum anthropi).